The sequence spans 192 residues: Fumarylpyruvate hydrolase (192 aa).

A divalent metal cation-binding residues include glutamate 41, glutamate 43, and aspartate 72.

It belongs to the FAH family. Mg(2+) serves as cofactor. Mn(2+) is required as a cofactor.

The catalysed reaction is 3-fumarylpyruvate + H2O = fumarate + pyruvate + H(+). Its pathway is aromatic compound metabolism; naphthalene degradation. In terms of biological role, involved in the catabolism of gentisate (2,5-dihydroxybenzoate) a key intermediates in the aerobic pathways for the metabolism of a large number of aromatic compoun such as naphthalene. Catalyzes the hydrolytic cleavage of fumarylpyruvate to form fumarate and pyruvate. The protein is Fumarylpyruvate hydrolase of Ralstonia sp.